The primary structure comprises 371 residues: Jasmonate-induced oxygenase 2 (371 aa).

The 102-residue stretch at 219 to 320 folds into the Fe2OG dioxygenase domain; it reads NIGACLRVNY…RVSLAFFYNP (102 aa). Arg-225 is a jasmonate binding site. 2-oxoglutarate is bound by residues Asn-227 and Tyr-229. Fe cation contacts are provided by His-244, Asp-246, and His-301. 2-oxoglutarate-binding residues include Arg-311 and Ser-313. 2 residues coordinate jasmonate: Arg-350 and Arg-354.

The protein belongs to the iron/ascorbate-dependent oxidoreductase family. L-ascorbate serves as cofactor. Fe(2+) is required as a cofactor.

It catalyses the reaction jasmonate + 2-oxoglutarate + O2 = (1R,2R)-12-hydroxyjasmonate + succinate + CO2. Its function is as follows. 2-oxoglutarate-dependent dioxygenase involved in the oxidation of jasmonate (JA), a stress-induced phytohormone synthesized in response to attack by pathogens and herbivores, which triggers the activation of defense responses via the JA-mediated signaling pathway. Converts JA to 12-hydroxyjasmonate (12OH-JA), an inactive form of JA. Is specific to free JA, and cannot oxidize the bioactive form jasmonoyl-L-isoleucine (JA-Ile) or other JA-amino acid conjugates. Prevents over-accumulation of JA and indirectly its bioactive form JA-Ile under stress response. Acts as a negative regulator of JA-mediated defense signaling, by contributing to 12OH-JA accumulation, which represses JA defense responses upon infection by the fungal pathogen Botrytis cinerea. Acts as a negative regulator of JA-mediated defense responses upon infestation by the herbivorous caterpillar Mamestra brassicae. May be involved in the catabolism of cytotoxic polycyclic aromatic hydrocarbons (PAHs). This chain is Jasmonate-induced oxygenase 2, found in Arabidopsis thaliana (Mouse-ear cress).